A 492-amino-acid polypeptide reads, in one-letter code: Protein nucleotidyltransferase YdiU (492 aa).

Positions 94, 96, 97, 117, 129, 130, 180, and 187 each coordinate ATP. Aspartate 257 functions as the Proton acceptor in the catalytic mechanism. The Mg(2+) site is built by asparagine 258 and aspartate 267. Aspartate 267 lines the ATP pocket.

This sequence belongs to the SELO family. Mg(2+) serves as cofactor. The cofactor is Mn(2+).

It catalyses the reaction L-seryl-[protein] + ATP = 3-O-(5'-adenylyl)-L-seryl-[protein] + diphosphate. The catalysed reaction is L-threonyl-[protein] + ATP = 3-O-(5'-adenylyl)-L-threonyl-[protein] + diphosphate. It carries out the reaction L-tyrosyl-[protein] + ATP = O-(5'-adenylyl)-L-tyrosyl-[protein] + diphosphate. The enzyme catalyses L-histidyl-[protein] + UTP = N(tele)-(5'-uridylyl)-L-histidyl-[protein] + diphosphate. It catalyses the reaction L-seryl-[protein] + UTP = O-(5'-uridylyl)-L-seryl-[protein] + diphosphate. The catalysed reaction is L-tyrosyl-[protein] + UTP = O-(5'-uridylyl)-L-tyrosyl-[protein] + diphosphate. Its function is as follows. Nucleotidyltransferase involved in the post-translational modification of proteins. It can catalyze the addition of adenosine monophosphate (AMP) or uridine monophosphate (UMP) to a protein, resulting in modifications known as AMPylation and UMPylation. In Halalkalibacterium halodurans (strain ATCC BAA-125 / DSM 18197 / FERM 7344 / JCM 9153 / C-125) (Bacillus halodurans), this protein is Protein nucleotidyltransferase YdiU.